We begin with the raw amino-acid sequence, 105 residues long: MANNVTDSSFKKEVLESDLPVLVDFWAEWCGPCKMLTPIIDEISKELKGKVKVLKMNIDENPNIPSEYGIRSIPTIMLFKNGEQKDTKIGLQQKNSLLDWINKSI.

Residues 1 to 105 enclose the Thioredoxin domain; that stretch reads MANNVTDSSF…SLLDWINKSI (105 aa). The cysteines at positions 30 and 33 are disulfide-linked.

This sequence belongs to the thioredoxin family.

Component of the thioredoxin-thioredoxin reductase system. Participates in various redox reactions through the reversible oxidation of its active center dithiol to a disulfide and catalyzes dithiol-disulfide exchange reactions. In Rickettsia felis (strain ATCC VR-1525 / URRWXCal2) (Rickettsia azadi), this protein is Thioredoxin (trxA).